A 175-amino-acid polypeptide reads, in one-letter code: Ribosome maturation factor RimM (175 aa).

Residues 100–173 form the PRC barrel domain; it reads EGEYYFHEII…TIIIRPMEGL (74 aa).

Belongs to the RimM family. In terms of assembly, binds ribosomal protein uS19.

Its subcellular location is the cytoplasm. Functionally, an accessory protein needed during the final step in the assembly of 30S ribosomal subunit, possibly for assembly of the head region. Essential for efficient processing of 16S rRNA. May be needed both before and after RbfA during the maturation of 16S rRNA. It has affinity for free ribosomal 30S subunits but not for 70S ribosomes. The polypeptide is Ribosome maturation factor RimM (Geobacillus kaustophilus (strain HTA426)).